The primary structure comprises 447 residues: Glucose-6-phosphate isomerase (447 aa).

The active-site Proton donor is glutamate 288. Catalysis depends on residues histidine 309 and lysine 423.

Belongs to the GPI family.

Its subcellular location is the cytoplasm. It catalyses the reaction alpha-D-glucose 6-phosphate = beta-D-fructose 6-phosphate. It participates in carbohydrate biosynthesis; gluconeogenesis. It functions in the pathway carbohydrate degradation; glycolysis; D-glyceraldehyde 3-phosphate and glycerone phosphate from D-glucose: step 2/4. In terms of biological role, catalyzes the reversible isomerization of glucose-6-phosphate to fructose-6-phosphate. The protein is Glucose-6-phosphate isomerase of Lactobacillus johnsonii (strain CNCM I-12250 / La1 / NCC 533).